A 425-amino-acid chain; its full sequence is MSATLRLTEQLISRPSVTPLDEGCIDLLSARLGALGFVCERMDSGPDSFRVVNLWAKREGFNPLAQENRGQSATKSAANEGEAHTTPIKTLVFAGHTDVVPTGPLEQWHSHPFTPSHRNGVLYGRGAADMKTSIAAMVVAVEEFLAAHPQPGLSIAFLLTSDEEGPATDGTVVVCKQLKARGEVLDYCIVGEPTSVSHLGDMIKNGRRGTMSGKLTIKGVQGHIAYPHLARNPVHLFAPALAQLVATEWDQGNAFFPATSWQVSNMHGGTGASNVIPGELVVDFNFRFCTESTPENLQQRLQAILDQHELDYDLKWTVGGLPFLTTPGELVNAVRGAIHAETGLDTELSTTGGTSDGRFIAKVCPQVIEFGPLNATIHKINECVDVSSLDPLKNIYKGVLERLAGISGMAGASGLAAVADSTSSP.

His96 contacts Zn(2+). Residue Asp98 is part of the active site. Position 129 (Asp129) interacts with Zn(2+). Catalysis depends on Glu163, which acts as the Proton acceptor. Zn(2+) contacts are provided by Glu164, Glu192, and His378.

This sequence belongs to the peptidase M20A family. DapE subfamily. In terms of assembly, homodimer. Zn(2+) serves as cofactor. Requires Co(2+) as cofactor.

It carries out the reaction N-succinyl-(2S,6S)-2,6-diaminopimelate + H2O = (2S,6S)-2,6-diaminopimelate + succinate. It participates in amino-acid biosynthesis; L-lysine biosynthesis via DAP pathway; LL-2,6-diaminopimelate from (S)-tetrahydrodipicolinate (succinylase route): step 3/3. Catalyzes the hydrolysis of N-succinyl-L,L-diaminopimelic acid (SDAP), forming succinate and LL-2,6-diaminopimelate (DAP), an intermediate involved in the bacterial biosynthesis of lysine and meso-diaminopimelic acid, an essential component of bacterial cell walls. The polypeptide is Succinyl-diaminopimelate desuccinylase (Polaromonas sp. (strain JS666 / ATCC BAA-500)).